The following is a 306-amino-acid chain: High osmolarity signaling protein MOS1 (306 aa).

The Cytoplasmic portion of the chain corresponds to methionine 1–phenylalanine 23. A helical transmembrane segment spans residues alanine 24–isoleucine 44. Topologically, residues alanine 45–proline 67 are extracellular. Residues phenylalanine 68–alanine 88 form a helical membrane-spanning segment. Residues serine 89–histidine 96 lie on the Cytoplasmic side of the membrane. The helical transmembrane segment at valine 97–leucine 117 threads the bilayer. The Extracellular portion of the chain corresponds to valine 118–glutamate 126. The chain crosses the membrane as a helical span at residues alanine 127–glycine 147. Residues serine 148–leucine 306 are Cytoplasmic-facing. Residues phenylalanine 204 to leucine 242 are disordered. The segment covering threonine 224 to lysine 235 has biased composition (polar residues). The region spanning aspartate 246–leucine 306 is the SH3 domain.

Belongs to the SHO1 family. In terms of assembly, forms homooligomers.

It localises to the cell membrane. Plasma membrane osmosensor that activates the high osmolarity glycerol (HOG) MAPK signaling pathway in response to high osmolarity. Affects fungal virulence. This chain is High osmolarity signaling protein MOS1 (MOS1), found in Metarhizium robertsii (strain ARSEF 23 / ATCC MYA-3075) (Metarhizium anisopliae (strain ARSEF 23)).